The following is a 175-amino-acid chain: Adenine phosphoribosyltransferase (175 aa).

This sequence belongs to the purine/pyrimidine phosphoribosyltransferase family. As to quaternary structure, homodimer.

The protein localises to the cytoplasm. The catalysed reaction is AMP + diphosphate = 5-phospho-alpha-D-ribose 1-diphosphate + adenine. It participates in purine metabolism; AMP biosynthesis via salvage pathway; AMP from adenine: step 1/1. Catalyzes a salvage reaction resulting in the formation of AMP, that is energically less costly than de novo synthesis. The sequence is that of Adenine phosphoribosyltransferase from Synechococcus sp. (strain JA-3-3Ab) (Cyanobacteria bacterium Yellowstone A-Prime).